The following is a 460-amino-acid chain: tRNA-splicing endonuclease subunit Sen2 (460 aa).

Positions 143–215 (EKEETPQHEP…SPSSHNGHVA (73 aa)) are disordered. Positions 159–170 (SSLEGRVEKDEL) are enriched in basic and acidic residues. Catalysis depends on residues tyrosine 364 and histidine 372. Residues serine 403, serine 406, and serine 410 each carry the phosphoserine modification. Residue lysine 411 is part of the active site.

It belongs to the tRNA-intron endonuclease family. In terms of assembly, tRNA splicing endonuclease is a heterotetramer composed of TSEN2, TSEN15, TSEN34/LENG5 and TSEN54. tRNA splicing endonuclease complex also contains proteins of the pre-mRNA 3'-end processing machinery such as CLP1, CPSF1, CPSF4 and CSTF2.

Its subcellular location is the nucleus. The protein localises to the nucleolus. It carries out the reaction pretRNA = a 3'-half-tRNA molecule with a 5'-OH end + a 5'-half-tRNA molecule with a 2',3'-cyclic phosphate end + an intron with a 2',3'-cyclic phosphate and a 5'-hydroxyl terminus.. Constitutes one of the two catalytic subunit of the tRNA-splicing endonuclease complex, a complex responsible for identification and cleavage of the splice sites in pre-tRNA. It cleaves pre-tRNA at the 5'- and 3'-splice sites to release the intron. The products are an intron and two tRNA half-molecules bearing 2',3'-cyclic phosphate and 5'-OH termini. There are no conserved sequences at the splice sites, but the intron is invariably located at the same site in the gene, placing the splice sites an invariant distance from the constant structural features of the tRNA body. Probably carries the active site for 5'-splice site cleavage. The tRNA splicing endonuclease is also involved in mRNA processing via its association with pre-mRNA 3'-end processing factors, establishing a link between pre-tRNA splicing and pre-mRNA 3'-end formation, suggesting that the endonuclease subunits function in multiple RNA-processing events. This Mus musculus (Mouse) protein is tRNA-splicing endonuclease subunit Sen2 (Tsen2).